The following is a 564-amino-acid chain: Potassium-transporting ATPase potassium-binding subunit (564 aa).

10 helical membrane passes run 4 to 24, 67 to 87, 135 to 155, 179 to 199, 254 to 274, 286 to 306, 382 to 402, 420 to 440, 487 to 507, and 528 to 548; these read YDYW…PFLG, MLAL…ILLF, AGLT…LVAL, LYGL…QGVP, WANL…VFTF, AILG…LWAE, AGMY…GLMI, LLVV…AIAA, LMLG…VLAL, and GPLF…LTFL.

This sequence belongs to the KdpA family. The system is composed of three essential subunits: KdpA, KdpB and KdpC.

It localises to the cell inner membrane. Its function is as follows. Part of the high-affinity ATP-driven potassium transport (or Kdp) system, which catalyzes the hydrolysis of ATP coupled with the electrogenic transport of potassium into the cytoplasm. This subunit binds the periplasmic potassium ions and delivers the ions to the membrane domain of KdpB through an intramembrane tunnel. The sequence is that of Potassium-transporting ATPase potassium-binding subunit from Pseudomonas fluorescens (strain SBW25).